The chain runs to 206 residues: Large ribosomal subunit protein uL4 (206 aa).

A disordered region spans residues 63–97 (MYKQKGTGRARHHSARAPQFRGGGKAHGPVVRSHE). Residues 64–77 (YKQKGTGRARHHSA) show a composition bias toward basic residues.

The protein belongs to the universal ribosomal protein uL4 family. Part of the 50S ribosomal subunit.

Functionally, one of the primary rRNA binding proteins, this protein initially binds near the 5'-end of the 23S rRNA. It is important during the early stages of 50S assembly. It makes multiple contacts with different domains of the 23S rRNA in the assembled 50S subunit and ribosome. Its function is as follows. Forms part of the polypeptide exit tunnel. In Rhizobium etli (strain ATCC 51251 / DSM 11541 / JCM 21823 / NBRC 15573 / CFN 42), this protein is Large ribosomal subunit protein uL4.